The following is a 530-amino-acid chain: 2,3-bisphosphoglycerate-independent phosphoglycerate mutase (530 aa).

Residues Asp15 and Ser65 each coordinate Mn(2+). Ser65 acts as the Phosphoserine intermediate in catalysis. Substrate is bound by residues His126, 155-156, Arg187, Arg193, 257-260, and Lys330; these read RD and RPDR. Mn(2+) contacts are provided by Asp397, His401, Asp438, His439, and His456.

Belongs to the BPG-independent phosphoglycerate mutase family. In terms of assembly, monomer. Mn(2+) serves as cofactor.

The catalysed reaction is (2R)-2-phosphoglycerate = (2R)-3-phosphoglycerate. The protein operates within carbohydrate degradation; glycolysis; pyruvate from D-glyceraldehyde 3-phosphate: step 3/5. Functionally, catalyzes the interconversion of 2-phosphoglycerate and 3-phosphoglycerate. The chain is 2,3-bisphosphoglycerate-independent phosphoglycerate mutase from Synechococcus sp. (strain JA-3-3Ab) (Cyanobacteria bacterium Yellowstone A-Prime).